The primary structure comprises 538 residues: Putative outer membrane porin BglH (538 aa).

A signal peptide spans 1-25 (MFRRNLITSAILLMAPLAFSAQSLA). A disordered region spans residues 52–82 (KDEEKKKYTPATVNRSVSTNDQGYAANPFPT). A compositionally biased stretch (polar residues) spans 62–73 (ATVNRSVSTNDQ).

It belongs to the porin LamB (TC 1.B.3) family.

The protein localises to the cell outer membrane. Functionally, may be a sugar porin with a broad carbohydrate specificity. The sequence is that of Putative outer membrane porin BglH (bglH) from Escherichia coli O139:H28 (strain E24377A / ETEC).